The primary structure comprises 207 residues: Large ribosomal subunit protein uL4 (207 aa).

A disordered region spans residues 47–77 (GTADTKTRAEVSGGGRKPWRQKGTGRARHGS). Positions 63 to 77 (KPWRQKGTGRARHGS) are enriched in basic residues.

The protein belongs to the universal ribosomal protein uL4 family. As to quaternary structure, part of the 50S ribosomal subunit.

In terms of biological role, one of the primary rRNA binding proteins, this protein initially binds near the 5'-end of the 23S rRNA. It is important during the early stages of 50S assembly. It makes multiple contacts with different domains of the 23S rRNA in the assembled 50S subunit and ribosome. Functionally, forms part of the polypeptide exit tunnel. This chain is Large ribosomal subunit protein uL4, found in Symbiobacterium thermophilum (strain DSM 24528 / JCM 14929 / IAM 14863 / T).